Here is a 62-residue protein sequence, read N- to C-terminus: UPF0434 protein Avi_4243 (62 aa).

Belongs to the UPF0434 family.

This is UPF0434 protein Avi_4243 from Allorhizobium ampelinum (strain ATCC BAA-846 / DSM 112012 / S4) (Agrobacterium vitis (strain S4)).